Reading from the N-terminus, the 437-residue chain is Trigger factor (437 aa).

The PPIase FKBP-type domain occupies 163–248 (GDIAVINFEG…LNQIKAKVLP (86 aa)).

Belongs to the FKBP-type PPIase family. Tig subfamily.

It localises to the cytoplasm. The catalysed reaction is [protein]-peptidylproline (omega=180) = [protein]-peptidylproline (omega=0). In terms of biological role, involved in protein export. Acts as a chaperone by maintaining the newly synthesized protein in an open conformation. Functions as a peptidyl-prolyl cis-trans isomerase. This chain is Trigger factor, found in Bdellovibrio bacteriovorus (strain ATCC 15356 / DSM 50701 / NCIMB 9529 / HD100).